The sequence spans 426 residues: Chaperone SurA (426 aa).

Residues 1–13 (MLGALFLGTAANA) form the signal peptide. PpiC domains lie at 164–265 (SEEL…KLLE) and 274–373 (RDEV…EVLG).

The protein resides in the periplasm. It catalyses the reaction [protein]-peptidylproline (omega=180) = [protein]-peptidylproline (omega=0). Functionally, chaperone involved in the correct folding and assembly of outer membrane proteins. Recognizes specific patterns of aromatic residues and the orientation of their side chains, which are found more frequently in integral outer membrane proteins. May act in both early periplasmic and late outer membrane-associated steps of protein maturation. This Pseudomonas fluorescens (strain Pf0-1) protein is Chaperone SurA.